We begin with the raw amino-acid sequence, 685 residues long: Sulfate transporter 4.1, chloroplastic (685 aa).

The transit peptide at 1 to 23 directs the protein to the chloroplast; the sequence is MSYASLSVKDLTSLVSRSGTGSS. A compositionally biased stretch (low complexity) spans 15-26; it reads VSRSGTGSSSSL. The disordered stretch occupies residues 15–53; that stretch reads VSRSGTGSSSSLKPPGQTRPVKVIPLQHPDTSNEARPPS. 12 consecutive transmembrane segments (helical) span residues 97–117, 122–142, 147–167, 175–195, 203–223, 255–275, 283–303, 332–352, 369–389, 406–426, 434–454, and 473–493; these read LDLM…MSYA, LPPI…AIFG, LAIG…GGIA, IELA…MGLL, FISH…IGLS, WPPF…KHVG, FLRA…AKVF, TLLP…VGIA, LFGL…PATG, LSGL…TPMF, LAAI…AIFL, and LFFG…AFVI. Residues 518 to 642 form the STAS domain; the sequence is QYPEAYTYNG…VRVHDAVQVC (125 aa).

It belongs to the SLC26A/SulP transporter (TC 2.A.53) family. Expressed both in roots and leaves.

It localises to the plastid. Its subcellular location is the chloroplast membrane. Its function is as follows. H(+)/sulfate cotransporter that may play a role in the regulation of sulfate assimilation. The protein is Sulfate transporter 4.1, chloroplastic (SULTR4;1) of Arabidopsis thaliana (Mouse-ear cress).